A 498-amino-acid polypeptide reads, in one-letter code: Beta-amylase 5 (498 aa).

Residues D56, H96, and D104 each coordinate substrate. The Proton donor role is filled by E189. The substrate site is built by K298, H303, and T345. E383 serves as the catalytic Proton acceptor. Residues 384 to 385 (NA) and R423 each bind substrate.

This sequence belongs to the glycosyl hydrolase 14 family. Detected in phloem sieve elements.

It localises to the cytoplasm. The enzyme catalyses Hydrolysis of (1-&gt;4)-alpha-D-glucosidic linkages in polysaccharides so as to remove successive maltose units from the non-reducing ends of the chains.. Its function is as follows. Beta-amylase activity. Major cytosolic beta-amylase isoform in rosette leaves and inflorescences stems. The sequence is that of Beta-amylase 5 (BAM5) from Arabidopsis thaliana (Mouse-ear cress).